A 422-amino-acid polypeptide reads, in one-letter code: Glutamate-1-semialdehyde 2,1-aminomutase (422 aa).

At Lys265 the chain carries N6-(pyridoxal phosphate)lysine.

It belongs to the class-III pyridoxal-phosphate-dependent aminotransferase family. HemL subfamily. It depends on pyridoxal 5'-phosphate as a cofactor.

The protein resides in the cytoplasm. The enzyme catalyses (S)-4-amino-5-oxopentanoate = 5-aminolevulinate. Its pathway is porphyrin-containing compound metabolism; protoporphyrin-IX biosynthesis; 5-aminolevulinate from L-glutamyl-tRNA(Glu): step 2/2. This chain is Glutamate-1-semialdehyde 2,1-aminomutase, found in Methanococcoides burtonii (strain DSM 6242 / NBRC 107633 / OCM 468 / ACE-M).